The chain runs to 434 residues: Probable glucuronosyltransferase Os02g0520750 (434 aa).

Residues 1–10 are Cytoplasmic-facing; sequence MVGARAGRVP. A helical; Signal-anchor for type II membrane protein transmembrane segment spans residues 11-31; that stretch reads AAAAAAAAVLIVAACVFSSLA. The Lumenal portion of the chain corresponds to 32 to 434; the sequence is GAAAAAEVVG…GPVADLKPWK (403 aa). 2 N-linked (GlcNAc...) asparagine glycosylation sites follow: Asn-160 and Asn-421.

It belongs to the glycosyltransferase 47 family.

The protein resides in the golgi apparatus membrane. Its function is as follows. Involved in the synthesis of glucuronoxylan hemicellulose in secondary cell walls. In Oryza sativa subsp. japonica (Rice), this protein is Probable glucuronosyltransferase Os02g0520750.